A 298-amino-acid chain; its full sequence is MAFARFARPTQRFLPFAIGAVAVTAGALYLNGWNTIKNENPKVFIGDRKWIDLELEKIIEESHDTKRFFFKLPTDDSVSGLTLASAVLTKFMTPKGNPVIRPYTPVSDLSEKGYIEFVIKHYEGGKMTDHLFQLKPKDTLAFQGPIPKWQWKPNSFDTITLLGGGTGITPLYQLVHHITQNKEDKTKINLFYGSKTPSDILLKKELDDLQKKYPEQLNIQYFVDKDDTGKFDGNKGFITKDFLAKNAPGPKEKTQVFVCGPPPFMDSLSGQKKSPMEQGDLTGALKDLGYSQDQVFKF.

A helical membrane pass occupies residues 13-33 (FLPFAIGAVAVTAGALYLNGW). Residues 48–152 (RKWIDLELEK…QGPIPKWQWK (105 aa)) enclose the FAD-binding FR-type domain. Residue 155–190 (SFDTITLLGGGTGITPLYQLVHHITQNKEDKTKINL) coordinates FAD.

The protein belongs to the flavoprotein pyridine nucleotide cytochrome reductase family. FAD is required as a cofactor.

Its subcellular location is the mitochondrion outer membrane. The enzyme catalyses 2 Fe(III)-[cytochrome b5] + NADH = 2 Fe(II)-[cytochrome b5] + NAD(+) + H(+). Functionally, may mediate the reduction of outer membrane cytochrome b5. The chain is NADH-cytochrome b5 reductase 2 (MCR1) from Candida glabrata (strain ATCC 2001 / BCRC 20586 / JCM 3761 / NBRC 0622 / NRRL Y-65 / CBS 138) (Yeast).